A 393-amino-acid chain; its full sequence is Inulin fructotransferase [DFA-I-forming] (393 aa).

The catalysed reaction is Produces alpha-D-fructofuranose beta-D-fructofuranose 1,2':2,1'-dianhydride (DFA I) by successively eliminating the diminishing (2-&gt;1)-beta-D-fructan (inulin) chain from the terminal D-fructosyl-D-fructosyl disaccharide.. The polypeptide is Inulin fructotransferase [DFA-I-forming] (Arthrobacter globiformis).